We begin with the raw amino-acid sequence, 92 residues long: Cell division protein FtsB (92 aa).

Topologically, residues 1 to 3 (MKW) are cytoplasmic. A helical membrane pass occupies residues 4 to 21 (VTVVLSFALVCCQYSLWF). Topologically, residues 22–92 (GKGSIGRNSS…TFYRLIRHNR (71 aa)) are periplasmic. A coiled-coil region spans residues 28–50 (RNSSLREQIAVQEEKNQTLALRN).

Belongs to the FtsB family. As to quaternary structure, part of a complex composed of FtsB, FtsL and FtsQ.

The protein resides in the cell inner membrane. Functionally, essential cell division protein. May link together the upstream cell division proteins, which are predominantly cytoplasmic, with the downstream cell division proteins, which are predominantly periplasmic. This Neisseria meningitidis serogroup C (strain 053442) protein is Cell division protein FtsB.